Consider the following 246-residue polypeptide: Ribonuclease PH (246 aa).

Phosphate contacts are provided by residues R91 and G129–R131.

This sequence belongs to the RNase PH family. In terms of assembly, homohexameric ring arranged as a trimer of dimers.

The enzyme catalyses tRNA(n+1) + phosphate = tRNA(n) + a ribonucleoside 5'-diphosphate. Functionally, phosphorolytic 3'-5' exoribonuclease that plays an important role in tRNA 3'-end maturation. Removes nucleotide residues following the 3'-CCA terminus of tRNAs; can also add nucleotides to the ends of RNA molecules by using nucleoside diphosphates as substrates, but this may not be physiologically important. Probably plays a role in initiation of 16S rRNA degradation (leading to ribosome degradation) during starvation. This chain is Ribonuclease PH, found in Paraburkholderia phymatum (strain DSM 17167 / CIP 108236 / LMG 21445 / STM815) (Burkholderia phymatum).